The following is a 290-amino-acid chain: Forkhead box protein O3B (290 aa).

Disordered stretches follow at residues 1–30 (METD…TEEG) and 44–239 (AAAA…SSRR). 2 stretches are compositionally biased toward low complexity: residues 44–59 (AAAA…RGVH) and 75–91 (RTPA…EAPA). T117 bears the Phosphothreonine; by PKB/AKT1 mark. A compositionally biased stretch (acidic residues) spans 142-153 (IPEEEDDEDDED). Residues 242-290 (WGNLSYADLITRAIESSPDRRLTLSQIYEWMVSCVPYFKDKGNSNSSAG) constitute a DNA-binding region (fork-head).

The protein resides in the cytoplasm. It is found in the cytosol. Its function is as follows. Transcription factor. The sequence is that of Forkhead box protein O3B from Homo sapiens (Human).